The primary structure comprises 296 residues: uncharacterized protein (296 aa).

6 helical membrane passes run 10 to 29 (FSTL…FSLL), 36 to 58 (YIVL…YYIL), 112 to 131 (FFAL…MFVT), 188 to 210 (ILIF…LYLR), 241 to 260 (MMYG…SAYF), and 273 to 295 (MYIS…VTYI).

It is found in the cell membrane. This is an uncharacterized protein from Clostridium acetobutylicum (strain ATCC 824 / DSM 792 / JCM 1419 / IAM 19013 / LMG 5710 / NBRC 13948 / NRRL B-527 / VKM B-1787 / 2291 / W).